The primary structure comprises 513 residues: Cytochrome P450 monooxygenase asaD (513 aa).

Residues 14-34 form a helical membrane-spanning segment; the sequence is ILYPFLFGIFAVASLCIATLL. N-linked (GlcNAc...) asparagine glycans are attached at residues N258, N370, N431, and N441. Residue C461 coordinates heme.

Belongs to the cytochrome P450 family. The cofactor is heme.

It localises to the membrane. It participates in secondary metabolite biosynthesis. Functionally, cytochrome P450 monooxygenase; part of the gene cluster that mediates the biosynthesis of aspergillic acid, a hydroxamic acid-containing pyrazinone with aliphatic side chains that originates from leucine (Leu) and isoleucine (Ile). Aspergillic acid has antibiotic properties and was shown to be lethal to mice. The first step in the pathway is the production of deoxyaspergillic acid via a condensation between the Ile amine and the Leu carboxylic acid, followed by a reductive release from the protein forming the dipeptide aldehyde NH(2)-Leu-Ile-CHO, which could undergo an intermolecular cyclization resulting in a dihydropyrazinone. As the NRPS asaC lacks a condensation domain, it is improbable that it is responsible for condensation of Leu and Ile. One possibility is that asaC acts on a previously condensed dipeptide and functions as a Leu-Ile reductase to yield deoxyaspergillic acid. After asaC forms deoxyaspergillic acid, the cytochrome P450 asaD oxidizes the pyrazinone to the hydroxamic acid-containing bioactive metabolite aspergillic acid. The hydroxylase/desaturase asaB can then convert aspergillic acid to hydroxyaspergillic acid. Both aspergillic acid and hydroxyaspergillic acid can form complexes with iron producing ferriaspergillin analogs. This Aspergillus flavus (strain ATCC 200026 / FGSC A1120 / IAM 13836 / NRRL 3357 / JCM 12722 / SRRC 167) protein is Cytochrome P450 monooxygenase asaD.